The sequence spans 311 residues: Short chain dehydrogenase opdN (311 aa).

Residues Leu48, Lys73, Glu96, Asn123, Tyr217, and Lys221 each contribute to the NADP(+) site. Residue Tyr217 is the Proton donor of the active site. Residue Lys221 is the Lowers pKa of active site Tyr of the active site.

The protein belongs to the short-chain dehydrogenases/reductases (SDR) family.

It functions in the pathway secondary metabolite biosynthesis. Its function is as follows. Short chain dehydrogenase; part of the gene cluster that mediates the biosynthesis of oxopyrrolidines, polyketide-amino acid hybrid compounds with feature structures of tetramic acid. Does not seem to play a role in oxopyrrolidines A and B biosynthesis. May be involved in further modifications of these oxopyrrolidines. The chain is Short chain dehydrogenase opdN from Penicillium oxalicum (strain 114-2 / CGMCC 5302) (Penicillium decumbens).